Consider the following 450-residue polypeptide: MNVKKVLLGLFLVGVLGIAVVASGCIGGQQTSTVTSTPTETSLQGKIVFAVGGAPNEIEYWKGVIAEFEKKYPGVTVELKRQATDTEQRRLDLVNALRGKSSDPDVFLMDVAWLGQFIASGWLEPLDDYVQKDNYDLSVFFQSVINLADKQGGKLYALPVYIDAGLLYYRKDLLEKYGYSKPPETWQELVEMAQKIQSGERETNPNFWGFVWQGKQYESLVCDFVEYVYSNGGSLGEFKDGKWVPTLNKPENVEALQFMVDLIHKYKISPPNTYTEMTEEPVRLMFQQGNAAFERNWPYAWGLHNADDSPVKGKVGVAPLPHFPGHKSAATLGGWHIGISKYSDNKALAWEFVKFVESYSVQKGFAMNLGWNPGRVDVYDDPAVVSKSPHLKELRAVFENAVPRPIVPYYPQLSEIIQKYVNSALAGKISPQEALDKAQKEAEELVKQYS.

A signal peptide spans 1–24 (MNVKKVLLGLFLVGVLGIAVVASG). Residues E57, T84, R89, D110, Y161, D163, Y217, E279, W297, Y299, G334, W335, W371, and R404 each contribute to the alpha,alpha-trehalose site.

The protein belongs to the bacterial solute-binding protein 1 family. As to quaternary structure, the complex is composed of two ATP-binding proteins (MalK), two transmembrane proteins (MalG and MalF) and a solute-binding protein (MalE). Post-translationally, glycosylated.

The protein resides in the cell membrane. Part of the ABC transporter complex MalEFGK involved in trehalose/maltose import. Binds maltose and trehalose. The protein is Trehalose/maltose-binding protein MalE (malE) of Thermococcus litoralis (strain ATCC 51850 / DSM 5473 / JCM 8560 / NS-C).